Here is a 273-residue protein sequence, read N- to C-terminus: Homeobox protein Nkx-2.2 (273 aa).

Disordered stretches follow at residues 1–56 and 91–131; these read MSLT…LDAV and AASA…KRKR. Acidic residues predominate over residues 20 to 38; that stretch reads DTNDEDGSVAEGPEEESEG. The segment at residues 128–187 is a DNA-binding region (homeobox); sequence KRKRRVLFSKAQTYELERRFRQQRYLSAPEREHLASLIRLTPTQVKIWFQNHRYKMKRAR.

Belongs to the NK-2 homeobox family. As to quaternary structure, interacts with OLIG2. As to expression, expressed in restricted areas of the developing CNS: the hindbrain and forebrain, and pancreas.

Its subcellular location is the nucleus. Functionally, transcriptional activator involved in the development of insulin-producting beta cells in the endocrine pancreas. May also be involved in specifying diencephalic neuromeric boundaries, and in controlling the expression of genes that play a role in axonal guidance. Binds to elements within the NEUROD1 promoter. The protein is Homeobox protein Nkx-2.2 (Nkx2-2) of Mus musculus (Mouse).